Here is a 248-residue protein sequence, read N- to C-terminus: tRNA pseudouridine synthase A (248 aa).

The active-site Nucleophile is D53. Residue Y111 participates in substrate binding.

Belongs to the tRNA pseudouridine synthase TruA family. Homodimer.

The catalysed reaction is uridine(38/39/40) in tRNA = pseudouridine(38/39/40) in tRNA. In terms of biological role, formation of pseudouridine at positions 38, 39 and 40 in the anticodon stem and loop of transfer RNAs. The polypeptide is tRNA pseudouridine synthase A (Streptococcus thermophilus (strain CNRZ 1066)).